Consider the following 354-residue polypeptide: Stimulator of interferon genes protein 3 (354 aa).

The next 4 helical transmembrane spans lie at 20 to 40, 48 to 68, 101 to 121, and 132 to 152; these read VTFA…FALW, INFV…GELI, YGSC…YALL, and YGIF…IVGI. 8 residues coordinate 3',3'-cGAMP: Asn-178, Tyr-183, Arg-250, Ile-251, Lys-253, Glu-272, Ser-275, and Asn-276.

It belongs to the STING family.

It is found in the membrane. Facilitator of innate immune signaling that acts as a sensor of second messenger signals produced by cyclic GMP-AMP synthase-like receptors (cGLRs) and promotes the production of type I interferon. Innate immune response is triggered in response to nucleotides from viruses and bacteria delivered to the cytoplasm. Acts by binding cyclic dinucleotides: recognizes and binds cyclic 3'-3' linked cGAMP (3'-3'-cGAMP), cyclic di-AMP (3',3'-c-di-AMP) and cyclic di-GMP (3',3'-c-di-GMP) second messengers produced by cGLRs in response to nucleotides in the cytosol, such as double-stranded RNA (dsRNA). Upon binding to 3'-3'-cGAMP, 3',3'-c-di-AMP or 3',3'-c-di-GMP, oligomerizes and promotes the recruitment and subsequent activation of the transcription factor IRF3 to induce expression of type I interferon. The protein is Stimulator of interferon genes protein 3 of Stylophora pistillata (Smooth cauliflower coral).